The primary structure comprises 283 residues: Elongation factor Ts (283 aa).

The segment at 80–83 (TDFV) is involved in Mg(2+) ion dislocation from EF-Tu.

Belongs to the EF-Ts family.

The protein localises to the cytoplasm. Associates with the EF-Tu.GDP complex and induces the exchange of GDP to GTP. It remains bound to the aminoacyl-tRNA.EF-Tu.GTP complex up to the GTP hydrolysis stage on the ribosome. The protein is Elongation factor Ts of Histophilus somni (strain 129Pt) (Haemophilus somnus).